The primary structure comprises 368 residues: Homoserine O-acetyltransferase (368 aa).

One can recognise an AB hydrolase-1 domain in the interval 41-352 (NVILITHALS…DYGHDSFLVE (312 aa)). Ser-147 (nucleophile) is an active-site residue. Residue Arg-219 coordinates substrate. Active-site residues include Asp-313 and His-346. Substrate is bound at residue Asp-347.

It belongs to the AB hydrolase superfamily. MetX family. As to quaternary structure, homodimer.

Its subcellular location is the cytoplasm. The catalysed reaction is L-homoserine + acetyl-CoA = O-acetyl-L-homoserine + CoA. It participates in amino-acid biosynthesis; L-methionine biosynthesis via de novo pathway; O-acetyl-L-homoserine from L-homoserine: step 1/1. Transfers an acetyl group from acetyl-CoA to L-homoserine, forming acetyl-L-homoserine. The sequence is that of Homoserine O-acetyltransferase from Nautilia profundicola (strain ATCC BAA-1463 / DSM 18972 / AmH).